A 295-amino-acid polypeptide reads, in one-letter code: Phosphatidylserine decarboxylase proenzyme (295 aa).

Residues Asp101, His158, and Ser262 each act as charge relay system; for autoendoproteolytic cleavage activity in the active site. Ser262 (schiff-base intermediate with substrate; via pyruvic acid; for decarboxylase activity) is an active-site residue. The residue at position 262 (Ser262) is a Pyruvic acid (Ser); by autocatalysis.

Belongs to the phosphatidylserine decarboxylase family. PSD-B subfamily. Prokaryotic type I sub-subfamily. As to quaternary structure, heterodimer of a large membrane-associated beta subunit and a small pyruvoyl-containing alpha subunit. Pyruvate is required as a cofactor. In terms of processing, is synthesized initially as an inactive proenzyme. Formation of the active enzyme involves a self-maturation process in which the active site pyruvoyl group is generated from an internal serine residue via an autocatalytic post-translational modification. Two non-identical subunits are generated from the proenzyme in this reaction, and the pyruvate is formed at the N-terminus of the alpha chain, which is derived from the carboxyl end of the proenzyme. The autoendoproteolytic cleavage occurs by a canonical serine protease mechanism, in which the side chain hydroxyl group of the serine supplies its oxygen atom to form the C-terminus of the beta chain, while the remainder of the serine residue undergoes an oxidative deamination to produce ammonia and the pyruvoyl prosthetic group on the alpha chain. During this reaction, the Ser that is part of the protease active site of the proenzyme becomes the pyruvoyl prosthetic group, which constitutes an essential element of the active site of the mature decarboxylase.

It localises to the cell membrane. It carries out the reaction a 1,2-diacyl-sn-glycero-3-phospho-L-serine + H(+) = a 1,2-diacyl-sn-glycero-3-phosphoethanolamine + CO2. The protein operates within phospholipid metabolism; phosphatidylethanolamine biosynthesis; phosphatidylethanolamine from CDP-diacylglycerol: step 2/2. Catalyzes the formation of phosphatidylethanolamine (PtdEtn) from phosphatidylserine (PtdSer). In Pasteurella multocida (strain Pm70), this protein is Phosphatidylserine decarboxylase proenzyme.